Consider the following 186-residue polypeptide: Ribosome-recycling factor (186 aa).

Belongs to the RRF family.

It is found in the cytoplasm. Its function is as follows. Responsible for the release of ribosomes from messenger RNA at the termination of protein biosynthesis. May increase the efficiency of translation by recycling ribosomes from one round of translation to another. The chain is Ribosome-recycling factor from Cupriavidus metallidurans (strain ATCC 43123 / DSM 2839 / NBRC 102507 / CH34) (Ralstonia metallidurans).